Consider the following 432-residue polypeptide: Guanine nucleotide-binding protein subunit alpha (432 aa).

Positions 1–97 are disordered; sequence MGGCMSTPEA…SKGNKDRSNQ (97 aa). Gly-2 is lipidated: N-myristoyl glycine. Cys-4 carries S-palmitoyl cysteine lipidation. Residues 21 to 52 are compositionally biased toward low complexity; it reads PSTSTSSRPPQASTSATATAAGAGTSAANGTA. The G-alpha domain occupies 111–432; sequence KECKILLLGS…QNALRDSGIL (322 aa). A G1 motif region spans residues 114–127; it reads KILLLGSGESGKST. Residues Glu-122, Ser-123, Gly-124, Lys-125, Ser-126, Thr-127, Asp-230, Leu-255, Thr-261, Gly-283, Asn-349, Lys-350, Asp-352, and Ala-404 each coordinate GTP. A Mg(2+)-binding site is contributed by Ser-126. Residues 253 to 261 are G2 motif; it reads DVLRARTKT. A Mg(2+)-binding site is contributed by Thr-261. A G3 motif region spans residues 276 to 285; sequence IHMFDVGGQR. The G4 motif stretch occupies residues 345 to 352; that stretch reads ILFLNKID. Residues 402-407 form a G5 motif region; the sequence is TQATDT.

Belongs to the G-alpha family. As to quaternary structure, g proteins are composed of 3 units; alpha, beta and gamma. The alpha chain contains the guanine nucleotide binding site. Mg(2+) serves as cofactor.

Its function is as follows. Guanine nucleotide-binding proteins (G proteins) are involved as modulators or transducers in various transmembrane signaling systems. Involved in the mating pathway. This chain is Guanine nucleotide-binding protein subunit alpha (GPA1), found in Cryptococcus neoformans var. neoformans serotype D (strain B-3501A) (Filobasidiella neoformans).